We begin with the raw amino-acid sequence, 213 residues long: 3-hexulose-6-phosphate synthase 2 (213 aa).

Belongs to the HPS/KGPDC family. HPS subfamily.

It carries out the reaction D-ribulose 5-phosphate + formaldehyde = D-arabino-hex-3-ulose 6-phosphate. Its pathway is one-carbon metabolism; formaldehyde assimilation via RuMP pathway; D-fructose 6-phosphate from D-ribulose 5-phosphate and formaldehyde: step 1/2. Catalyzes the condensation of ribulose 5-phosphate with formaldehyde to form 3-hexulose 6-phosphate. The protein is 3-hexulose-6-phosphate synthase 2 of Staphylococcus saprophyticus subsp. saprophyticus (strain ATCC 15305 / DSM 20229 / NCIMB 8711 / NCTC 7292 / S-41).